The chain runs to 439 residues: tRNA-2-methylthio-N(6)-dimethylallyladenosine synthase (439 aa).

The region spanning 2-119 (KYIYIKTWGC…LPKMIDEVEK (118 aa)) is the MTTase N-terminal domain. [4Fe-4S] cluster-binding residues include C11, C48, C82, C156, C160, and C163. One can recognise a Radical SAM core domain in the interval 142–374 (KKKGYTADIS…QERINIQTML (233 aa)). In terms of domain architecture, TRAM spans 377-439 (RKMFGSIQSV…HTHSLKGELF (63 aa)).

It belongs to the methylthiotransferase family. MiaB subfamily. In terms of assembly, monomer. The cofactor is [4Fe-4S] cluster.

Its subcellular location is the cytoplasm. The enzyme catalyses N(6)-dimethylallyladenosine(37) in tRNA + (sulfur carrier)-SH + AH2 + 2 S-adenosyl-L-methionine = 2-methylsulfanyl-N(6)-dimethylallyladenosine(37) in tRNA + (sulfur carrier)-H + 5'-deoxyadenosine + L-methionine + A + S-adenosyl-L-homocysteine + 2 H(+). In terms of biological role, catalyzes the methylthiolation of N6-(dimethylallyl)adenosine (i(6)A), leading to the formation of 2-methylthio-N6-(dimethylallyl)adenosine (ms(2)i(6)A) at position 37 in tRNAs that read codons beginning with uridine. This is tRNA-2-methylthio-N(6)-dimethylallyladenosine synthase from Buchnera aphidicola subsp. Acyrthosiphon pisum (strain APS) (Acyrthosiphon pisum symbiotic bacterium).